Here is a 330-residue protein sequence, read N- to C-terminus: AH receptor-interacting protein (330 aa).

Residues 31-121 form the PPIase FKBP-type domain; sequence GTKATFHYRT…KDPLEGQRHC (91 aa). The residue at position 43 (S43) is a Phosphoserine. TPR repeat units follow at residues 179 to 212, 231 to 264, and 265 to 298; these read VPLIHQEGNRLYREGHVKEAAAKYYDAIACLKNL, TPLLLNYCQCKLVVEEYYEVLDHCSSILNKYDDN, and VKAYFKRGKAHAAVWNAQEAQADFAKVLELDPAL.

Interacts with RET in the pituitary gland; this interaction prevents the formation of the AIP-survivin complex. In terms of tissue distribution, widely expressed. Higher levels seen in the heart, placenta and skeletal muscle. Not expressed in the liver.

The protein resides in the cytoplasm. In terms of biological role, may play a positive role in AHR-mediated (aromatic hydrocarbon receptor) signaling, possibly by influencing its receptivity for ligand and/or its nuclear targeting. Its function is as follows. Cellular negative regulator of the hepatitis B virus (HBV) X protein. This is AH receptor-interacting protein (AIP) from Homo sapiens (Human).